Here is a 132-residue protein sequence, read N- to C-terminus: Mediator of RNA polymerase II transcription subunit 11 (132 aa).

The protein belongs to the Mediator complex subunit 11 family. In terms of assembly, component of the Mediator complex.

It is found in the nucleus. Functionally, component of the Mediator complex, a coactivator involved in the regulated transcription of nearly all RNA polymerase II-dependent genes. Mediator functions as a bridge to convey information from gene-specific regulatory proteins to the basal RNA polymerase II transcription machinery. Mediator is recruited to promoters by direct interactions with regulatory proteins and serves as a scaffold for theQ9P086 assembly of a functional pre-initiation complex with RNA polymerase II and the general transcription factors. This chain is Mediator of RNA polymerase II transcription subunit 11 (MED11), found in Aedes aegypti (Yellowfever mosquito).